The sequence spans 61 residues: Temporin-ALj (61 aa).

An N-terminal signal peptide occupies residues 1 to 22 (MFTLKKSLLLLFFLATINLSFC). Residues 23-46 (EQERNAEEERRDEPDERNAEVEKR) constitute a propeptide that is removed on maturation. A Leucine amide modification is found at Leu-59.

Belongs to the frog skin active peptide (FSAP) family. Temporin subfamily. As to expression, expressed by the skin glands.

It is found in the secreted. Antimicrobial peptide with activity against Gram-positive and Gram-negative bacteria and against fungi. Has been tested against S.aureus (MIC=7.5 ug/mL), B.pumilus (MIC=15.0 ug/mL), B.cereus (MIC=75.0 ug/mL), E.coli (MIC=15.0 ug/mL), B.dysenteriae (MIC=30.0 ug/mL), A.cacoaceticus (MIC=60.0 ug/mL), P.aeruginosa (MIC=7.5 ug/mL) and C.albicans (MIC=5.0 ug/mL). Also shows a weak hemolytic activity. The sequence is that of Temporin-ALj from Amolops loloensis (Lolokou Sucker Frog).